A 290-amino-acid polypeptide reads, in one-letter code: Protease HtpX (290 aa).

Helical transmembrane passes span 6–26 (LFLVTNLAVMLVLGVVLNILF) and 36–56 (ISGLLMFCAVFGFGGSFISLL). Position 143 (histidine 143) interacts with Zn(2+). The active site involves glutamate 144. Histidine 147 is a Zn(2+) binding site. A run of 2 helical transmembrane segments spans residues 158–178 (LIQGVVNTFVMFFARIVAGVI) and 200–220 (ITVFVLEMAFGVLASMIVMWF). Glutamate 225 is a Zn(2+) binding site.

Belongs to the peptidase M48B family. Zn(2+) serves as cofactor.

It is found in the cell inner membrane. This Aeromonas salmonicida (strain A449) protein is Protease HtpX.